The following is a 253-amino-acid chain: Probable transcriptional regulatory protein Krad_3057 (253 aa).

The protein belongs to the TACO1 family.

It is found in the cytoplasm. This is Probable transcriptional regulatory protein Krad_3057 from Kineococcus radiotolerans (strain ATCC BAA-149 / DSM 14245 / SRS30216).